The primary structure comprises 318 residues: Basic leucine zipper (bZIP) transcription factor atfB (318 aa).

Residues 114–157 (FNSSPPEYAPPKHRSSLSEQSQTDGYGVSTRRRKASAIDQCEQQ) are disordered. The tract at residues 160-199 (REKREKFLERNRLAASKCRQKKKEHTKLLETRFREVSNKK) is basic motif. In terms of domain architecture, bZIP spans 160-223 (REKREKFLER…LNLKNEMLRH (64 aa)). Positions 202-216 (LESEIEHLRSEVLNL) are leucine-zipper. Residues 275-301 (DGPMQLPSEMGSPLDQRRDSEQSIMTE) form a disordered region.

This sequence belongs to the bZIP family. ATF subfamily.

Its subcellular location is the nucleus. In terms of biological role, transcription factor that acts as a key player in the regulatory circuit that integrates secondary metabolism and cellular response to oxidative stress. Regulates the genes involved in development and stress response through direct binding to their promoters. The polypeptide is Basic leucine zipper (bZIP) transcription factor atfB (Aspergillus flavus (strain ATCC 200026 / FGSC A1120 / IAM 13836 / NRRL 3357 / JCM 12722 / SRRC 167)).